Reading from the N-terminus, the 271-residue chain is CAAX prenyl protease 2 (271 aa).

Topologically, residues 1-9 (MISSYKYNP) are extracellular. The helical transmembrane segment at 10-30 (KLYFLSTFVVTYILWFTGAYL) threads the bilayer. Residues 31–38 (SFSSTYSG) are Cytoplasmic-facing. A helical transmembrane segment spans residues 39 to 59 (IYMLIMLPGLMAPFIISTILI). At 60 to 82 (AKSKNNELKKDFINRLFNLKLIN) the chain is on the extracellular side. Residues 83-105 (LKTIPVVFLLMPAVILLSILLSI) form a helical membrane-spanning segment. At 106-125 (PFGGSISQFQFSGGFSFSTD) the chain is on the cytoplasmic side. The helical transmembrane segment at 126 to 149 (FVPVLFLLLLAATFEELGWRGYAF) threads the bilayer. The Proton donor/acceptor role is filled by glutamate 140. Residues 150–159 (DSLQSRYSLF) lie on the Extracellular side of the membrane. Residues 160 to 179 (KASILFGIFWSLWHFPLIFV) form a helical membrane-spanning segment. Histidine 173 functions as the Proton donor/acceptor in the catalytic mechanism. Residues 180-192 (NNSYQYEIFNQSI) are Cytoplasmic-facing. The helical transmembrane segment at 193-213 (WYGLNFFLSILPMGIIITWMC) threads the bilayer. Residues 214–219 (LKNRKS) are Extracellular-facing. The helical transmembrane segment at 220-237 (IILAIIFHFLINLNQELL) threads the bilayer. The Cytoplasmic segment spans residues 238–243 (AITQDT). A helical membrane pass occupies residues 244-263 (KIIETGVLFLVAAAIILYDK). Residues 264–271 (KMFFEKLG) are Extracellular-facing.

Belongs to the peptidase U48 family.

It is found in the cell membrane. It catalyses the reaction Hydrolyzes the peptide bond -P2-(S-farnesyl or geranylgeranyl)C-P1'-P2'-P3'-COOH where P1' and P2' are amino acids with aliphatic sidechains and P3' is any C-terminal residue.. Activity is unaffected by metalloprotease inhibitors 5 mM EDTA and 5 mM Zn(2+). Activity partially inhibited by 1,10-phenanthroline and 1,7-phenanthroline. Functionally, protease involved in the processing of a variety of prenylated proteins containing the C-terminal CAAX motif, where C is a cysteine modified with an isoprenoid lipid, A is an aliphatic amino acid and X is any C-terminal amino acid. Proteolytically removes the C-terminal three residues of farnesylated proteins, leaving the prenylated cysteine as the new C-terminus. Hydrolysis depends on a farnesylated cysteine residue and no activity is shown towards geranylgeranylated peptides. The protein is CAAX prenyl protease 2 of Methanococcus maripaludis (strain DSM 14266 / JCM 13030 / NBRC 101832 / S2 / LL).